We begin with the raw amino-acid sequence, 673 residues long: UvrABC system protein B (673 aa).

Residues Glu-29–Asp-188 form the Helicase ATP-binding domain. Gly-42–Thr-49 contributes to the ATP binding site. Positions Tyr-95–Ile-118 match the Beta-hairpin motif. The region spanning Gln-434 to Leu-600 is the Helicase C-terminal domain. The tract at residues Lys-607 to Glu-632 is disordered. The UVR domain occupies Glu-634–Val-669.

This sequence belongs to the UvrB family. In terms of assembly, forms a heterotetramer with UvrA during the search for lesions. Interacts with UvrC in an incision complex.

Its subcellular location is the cytoplasm. In terms of biological role, the UvrABC repair system catalyzes the recognition and processing of DNA lesions. A damage recognition complex composed of 2 UvrA and 2 UvrB subunits scans DNA for abnormalities. Upon binding of the UvrA(2)B(2) complex to a putative damaged site, the DNA wraps around one UvrB monomer. DNA wrap is dependent on ATP binding by UvrB and probably causes local melting of the DNA helix, facilitating insertion of UvrB beta-hairpin between the DNA strands. Then UvrB probes one DNA strand for the presence of a lesion. If a lesion is found the UvrA subunits dissociate and the UvrB-DNA preincision complex is formed. This complex is subsequently bound by UvrC and the second UvrB is released. If no lesion is found, the DNA wraps around the other UvrB subunit that will check the other stand for damage. In Actinobacillus pleuropneumoniae serotype 5b (strain L20), this protein is UvrABC system protein B.